Consider the following 359-residue polypeptide: Small ribosomal subunit biogenesis GTPase RsgA (359 aa).

Residues 101–259 (KRKGSQAIAS…LMDNPGIREV (159 aa)) enclose the CP-type G domain. Residues 149–152 (NKKD) and 201–209 (GSSGAGKST) contribute to the GTP site. 4 residues coordinate Zn(2+): Cys284, Cys289, His291, and Cys297. Positions 331 to 359 (DPEEARKKKQKDKQMSKALQKRLKDKGRK) are disordered. Positions 349–359 (LQKRLKDKGRK) are enriched in basic residues.

This sequence belongs to the TRAFAC class YlqF/YawG GTPase family. RsgA subfamily. In terms of assembly, monomer. Associates with 30S ribosomal subunit, binds 16S rRNA. Zn(2+) serves as cofactor.

It localises to the cytoplasm. Its function is as follows. One of several proteins that assist in the late maturation steps of the functional core of the 30S ribosomal subunit. Helps release RbfA from mature subunits. May play a role in the assembly of ribosomal proteins into the subunit. Circularly permuted GTPase that catalyzes slow GTP hydrolysis, GTPase activity is stimulated by the 30S ribosomal subunit. The protein is Small ribosomal subunit biogenesis GTPase RsgA of Leptospira interrogans serogroup Icterohaemorrhagiae serovar copenhageni (strain Fiocruz L1-130).